The primary structure comprises 181 residues: MRILGIDPGLRTTGFGVLEKHGNKLSYIASGTIKSNGETDLPARLKTLFDGISEVARTYTPDCAAIEKVFVNVNPQSTLLLGQARGAAICGLVGQGLPVFEYTALQLKVAVVGYGRANKEQVQEMVMRLLSLPGRPSTDAADALGVAICHANGGDTLGTLSGLAPELVRKGMRVRRGRLIG.

Catalysis depends on residues D7, E67, and D139. Residues D7, E67, and D139 each contribute to the Mg(2+) site.

It belongs to the RuvC family. As to quaternary structure, homodimer which binds Holliday junction (HJ) DNA. The HJ becomes 2-fold symmetrical on binding to RuvC with unstacked arms; it has a different conformation from HJ DNA in complex with RuvA. In the full resolvosome a probable DNA-RuvA(4)-RuvB(12)-RuvC(2) complex forms which resolves the HJ. The cofactor is Mg(2+).

The protein resides in the cytoplasm. The catalysed reaction is Endonucleolytic cleavage at a junction such as a reciprocal single-stranded crossover between two homologous DNA duplexes (Holliday junction).. Its function is as follows. The RuvA-RuvB-RuvC complex processes Holliday junction (HJ) DNA during genetic recombination and DNA repair. Endonuclease that resolves HJ intermediates. Cleaves cruciform DNA by making single-stranded nicks across the HJ at symmetrical positions within the homologous arms, yielding a 5'-phosphate and a 3'-hydroxyl group; requires a central core of homology in the junction. The consensus cleavage sequence is 5'-(A/T)TT(C/G)-3'. Cleavage occurs on the 3'-side of the TT dinucleotide at the point of strand exchange. HJ branch migration catalyzed by RuvA-RuvB allows RuvC to scan DNA until it finds its consensus sequence, where it cleaves and resolves the cruciform DNA. This chain is Crossover junction endodeoxyribonuclease RuvC, found in Cupriavidus pinatubonensis (strain JMP 134 / LMG 1197) (Cupriavidus necator (strain JMP 134)).